A 178-amino-acid polypeptide reads, in one-letter code: Crossover junction endodeoxyribonuclease RuvC (178 aa).

Catalysis depends on residues Asp21, Glu81, and His154. 3 residues coordinate Mg(2+): Asp21, Glu81, and His154.

This sequence belongs to the RuvC family. In terms of assembly, homodimer which binds Holliday junction (HJ) DNA. The HJ becomes 2-fold symmetrical on binding to RuvC with unstacked arms; it has a different conformation from HJ DNA in complex with RuvA. In the full resolvosome a probable DNA-RuvA(4)-RuvB(12)-RuvC(2) complex forms which resolves the HJ. Mg(2+) serves as cofactor.

Its subcellular location is the cytoplasm. The enzyme catalyses Endonucleolytic cleavage at a junction such as a reciprocal single-stranded crossover between two homologous DNA duplexes (Holliday junction).. Its function is as follows. The RuvA-RuvB-RuvC complex processes Holliday junction (HJ) DNA during genetic recombination and DNA repair. Endonuclease that resolves HJ intermediates. Cleaves cruciform DNA by making single-stranded nicks across the HJ at symmetrical positions within the homologous arms, yielding a 5'-phosphate and a 3'-hydroxyl group; requires a central core of homology in the junction. The consensus cleavage sequence is 5'-(A/T)TT(C/G)-3'. Cleavage occurs on the 3'-side of the TT dinucleotide at the point of strand exchange. HJ branch migration catalyzed by RuvA-RuvB allows RuvC to scan DNA until it finds its consensus sequence, where it cleaves and resolves the cruciform DNA. The polypeptide is Crossover junction endodeoxyribonuclease RuvC (Treponema denticola (strain ATCC 35405 / DSM 14222 / CIP 103919 / JCM 8153 / KCTC 15104)).